The chain runs to 233 residues: Small ribosomal subunit protein uS3 (233 aa).

A KH type-2 domain is found at 39-107; sequence VRQYLTKELA…PAQINIAEVR (69 aa).

This sequence belongs to the universal ribosomal protein uS3 family. Part of the 30S ribosomal subunit. Forms a tight complex with proteins S10 and S14.

Its function is as follows. Binds the lower part of the 30S subunit head. Binds mRNA in the 70S ribosome, positioning it for translation. This chain is Small ribosomal subunit protein uS3, found in Citrobacter koseri (strain ATCC BAA-895 / CDC 4225-83 / SGSC4696).